Consider the following 393-residue polypeptide: NAD(P)H-quinone oxidoreductase subunit H, chloroplastic (393 aa).

It belongs to the complex I 49 kDa subunit family. NDH is composed of at least 16 different subunits, 5 of which are encoded in the nucleus.

Its subcellular location is the plastid. The protein resides in the chloroplast thylakoid membrane. It catalyses the reaction a plastoquinone + NADH + (n+1) H(+)(in) = a plastoquinol + NAD(+) + n H(+)(out). It carries out the reaction a plastoquinone + NADPH + (n+1) H(+)(in) = a plastoquinol + NADP(+) + n H(+)(out). Functionally, NDH shuttles electrons from NAD(P)H:plastoquinone, via FMN and iron-sulfur (Fe-S) centers, to quinones in the photosynthetic chain and possibly in a chloroplast respiratory chain. The immediate electron acceptor for the enzyme in this species is believed to be plastoquinone. Couples the redox reaction to proton translocation, and thus conserves the redox energy in a proton gradient. The protein is NAD(P)H-quinone oxidoreductase subunit H, chloroplastic of Nicotiana sylvestris (Wood tobacco).